The chain runs to 480 residues: Aspartyl/glutamyl-tRNA(Asn/Gln) amidotransferase subunit B (480 aa).

The protein belongs to the GatB/GatE family. GatB subfamily. Heterotrimer of A, B and C subunits.

The catalysed reaction is L-glutamyl-tRNA(Gln) + L-glutamine + ATP + H2O = L-glutaminyl-tRNA(Gln) + L-glutamate + ADP + phosphate + H(+). The enzyme catalyses L-aspartyl-tRNA(Asn) + L-glutamine + ATP + H2O = L-asparaginyl-tRNA(Asn) + L-glutamate + ADP + phosphate + 2 H(+). In terms of biological role, allows the formation of correctly charged Asn-tRNA(Asn) or Gln-tRNA(Gln) through the transamidation of misacylated Asp-tRNA(Asn) or Glu-tRNA(Gln) in organisms which lack either or both of asparaginyl-tRNA or glutaminyl-tRNA synthetases. The reaction takes place in the presence of glutamine and ATP through an activated phospho-Asp-tRNA(Asn) or phospho-Glu-tRNA(Gln). The polypeptide is Aspartyl/glutamyl-tRNA(Asn/Gln) amidotransferase subunit B (Streptococcus pneumoniae serotype 2 (strain D39 / NCTC 7466)).